Consider the following 284-residue polypeptide: Halorhodopsin (284 aa).

Residues 1 to 30 (MIETAAADILAGGMVPLEMTQTQIFEAVQS) are Extracellular-facing. The chain crosses the membrane as a helical span at residues 31–56 (DTLLASSLWINIALAGLSILLFVYMG). At 57–62 (RNVEDP) the chain is on the cytoplasmic side. Residues 63–86 (RAQLIFVATLMVPLVSISSYTGLV) form a helical membrane-spanning segment. Over 87–110 (SGLTVSFLEMPAGHALAGQEVLTP) the chain is Extracellular. A helical transmembrane segment spans residues 111–132 (WGRYLTWALSTPMILIAVGLLA). The Cytoplasmic portion of the chain corresponds to 133–135 (GSN). Residues 136–159 (TTKLFTAVVADIGMCVTGLAAALT) form a helical membrane-spanning segment. At 160–162 (TSS) the chain is on the extracellular side. The helical transmembrane segment at 163–185 (YLLRWVWYAISCAFFVVVLYILL) threads the bilayer. The Cytoplasmic portion of the chain corresponds to 186 to 197 (AEWAEDAEIAGT). A helical transmembrane segment spans residues 198–221 (ADIFNTLKVLTVVLWLGYPIFWAL). The Extracellular portion of the chain corresponds to 222–230 (GAEGLAVLD). A helical membrane pass occupies residues 231–259 (VAITSWAYSGMDIVAKYLFAFLLLRWVVN). Lys-246 is subject to N6-(retinylidene)lysine. Topologically, residues 260–284 (NERTVADVASGLGSGSRGGAAPADD) are cytoplasmic.

It belongs to the archaeal/bacterial/fungal opsin family.

Its subcellular location is the cell membrane. Light-driven chloride pump. This Halobacterium sp. (strain SG1) protein is Halorhodopsin (hop).